The primary structure comprises 270 residues: Tryptophan synthase alpha chain (270 aa).

Catalysis depends on proton acceptor residues E57 and D68.

It belongs to the TrpA family. As to quaternary structure, tetramer of two alpha and two beta chains.

The enzyme catalyses (1S,2R)-1-C-(indol-3-yl)glycerol 3-phosphate + L-serine = D-glyceraldehyde 3-phosphate + L-tryptophan + H2O. It participates in amino-acid biosynthesis; L-tryptophan biosynthesis; L-tryptophan from chorismate: step 5/5. Its function is as follows. The alpha subunit is responsible for the aldol cleavage of indoleglycerol phosphate to indole and glyceraldehyde 3-phosphate. This Mycobacterium bovis (strain ATCC BAA-935 / AF2122/97) protein is Tryptophan synthase alpha chain.